Here is a 417-residue protein sequence, read N- to C-terminus: Serine hydroxymethyltransferase 1 (417 aa).

(6S)-5,6,7,8-tetrahydrofolate contacts are provided by residues leucine 121 and glycine 125–leucine 127. Residue lysine 230 is modified to N6-(pyridoxal phosphate)lysine. Serine 355–phenylalanine 357 provides a ligand contact to (6S)-5,6,7,8-tetrahydrofolate.

This sequence belongs to the SHMT family. In terms of assembly, homodimer. The cofactor is pyridoxal 5'-phosphate.

The protein resides in the cytoplasm. The catalysed reaction is (6R)-5,10-methylene-5,6,7,8-tetrahydrofolate + glycine + H2O = (6S)-5,6,7,8-tetrahydrofolate + L-serine. The protein operates within one-carbon metabolism; tetrahydrofolate interconversion. It participates in amino-acid biosynthesis; glycine biosynthesis; glycine from L-serine: step 1/1. Its function is as follows. Catalyzes the reversible interconversion of serine and glycine with tetrahydrofolate (THF) serving as the one-carbon carrier. This reaction serves as the major source of one-carbon groups required for the biosynthesis of purines, thymidylate, methionine, and other important biomolecules. Also exhibits THF-independent aldolase activity toward beta-hydroxyamino acids, producing glycine and aldehydes, via a retro-aldol mechanism. This is Serine hydroxymethyltransferase 1 from Pseudomonas syringae pv. tomato (strain ATCC BAA-871 / DC3000).